We begin with the raw amino-acid sequence, 74 residues long: Progonadoliberin-3 (74 aa).

An N-terminal signal peptide occupies residues V1–S15. Q16 bears the Pyrrolidone carboxylic acid mark. G25 is modified (glycine amide).

It belongs to the GnRH family.

It is found in the secreted. Stimulates the secretion of gonadotropins. This chain is Progonadoliberin-3 (gnrh3), found in Oncorhynchus mykiss (Rainbow trout).